Consider the following 496-residue polypeptide: tRNA modification GTPase mss1, mitochondrial (496 aa).

The transit peptide at Met1 to Phe19 directs the protein to the mitochondrion. The region spanning Gly239–Glu416 is the TrmE-type G domain. GTP contacts are provided by residues Gly246–Ser253, Asp293–Leu297, and Asn363–Asp366.

Belongs to the TRAFAC class TrmE-Era-EngA-EngB-Septin-like GTPase superfamily. TrmE GTPase family.

The protein localises to the mitochondrion. Its function is as follows. GTPase involved in the 5-carboxymethylaminomethyl modification (mnm(5)s(2)U34) of the wobble uridine base in mitochondrial tRNAs. The sequence is that of tRNA modification GTPase mss1, mitochondrial (mss1) from Schizosaccharomyces pombe (strain 972 / ATCC 24843) (Fission yeast).